The sequence spans 342 residues: Endoplasmic reticulum junction formation protein lunapark-1 (342 aa).

Residues 1–39 (MGNLFSRNKSPATELERVALSIDDLKKRLQTISSSNTNT) lie on the Cytoplasmic side of the membrane. Positions 13-34 (TELERVALSIDDLKKRLQTISS) form a coiled coil. A helical transmembrane segment spans residues 40–60 (LYYYYMSIVVILSIAMAHTWL). Residues 61 to 68 (RFEDPQKT) are Lumenal-facing. Residues 69–89 (YVACALMLGAIGIVLAGRYVI) form a helical membrane-spanning segment. Topologically, residues 90 to 342 (NGFFSWRTNR…ESKTMETEFH (253 aa)) are cytoplasmic. Residues 102–136 (QKLENAISQKTTLLDLVKETLKFKEAKEILDRYEK) are a coiled coil. Residues 161 to 191 (ADSSMFATPKQEQKRVETPTAQGPNSAMNSM) are disordered. The segment covering 179–191 (PTAQGPNSAMNSM) has biased composition (polar residues). The segment at 236 to 261 (CSICHTHNGMSTPAEYPYISFRCFEC) adopts a C4-type; plays a role in ER morphology zinc-finger fold. Residues 278–342 (RPPMGPKGIQ…ESKTMETEFH (65 aa)) are disordered. Residues 295–321 (SENTHNMMENQKPSTDLTPSASQNGSE) show a composition bias toward polar residues. Basic and acidic residues predominate over residues 322-342 (KGSDSENEKVPESKTMETEFH).

The protein belongs to the lunapark family. As to expression, expressed in cell bodies along the ventral cord around the pharynx and the tail both in larvae and adults. Also expressed in muscles and hypodermal cells.

Its subcellular location is the endoplasmic reticulum membrane. Its function is as follows. Plays a role in tubular endoplasmic reticulum network formation and maintenance. May be involved in central nervous system development. Has a presynaptic role in neurotransmission. Likely to operate in synaptogenesis by regulating vesicular transport or localization. Required for correct localization of rab-3 and snb-1. This is Endoplasmic reticulum junction formation protein lunapark-1 (lnp-1) from Caenorhabditis elegans.